A 91-amino-acid chain; its full sequence is Small ribosomal subunit protein uS15 (91 aa).

This sequence belongs to the universal ribosomal protein uS15 family. As to quaternary structure, part of the 30S ribosomal subunit. Forms a bridge to the 50S subunit in the 70S ribosome, contacting the 23S rRNA.

In terms of biological role, one of the primary rRNA binding proteins, it binds directly to 16S rRNA where it helps nucleate assembly of the platform of the 30S subunit by binding and bridging several RNA helices of the 16S rRNA. Its function is as follows. Forms an intersubunit bridge (bridge B4) with the 23S rRNA of the 50S subunit in the ribosome. The chain is Small ribosomal subunit protein uS15 from Amoebophilus asiaticus (strain 5a2).